The primary structure comprises 80 residues: Acyl carrier protein (80 aa).

The Carrier domain occupies 2–77; sequence SEINQKVVDI…QVVEYLEKRL (76 aa). Ser-37 carries the O-(pantetheine 4'-phosphoryl)serine modification.

Belongs to the acyl carrier protein (ACP) family. In terms of processing, 4'-phosphopantetheine is transferred from CoA to a specific serine of apo-ACP by AcpS. This modification is essential for activity because fatty acids are bound in thioester linkage to the sulfhydryl of the prosthetic group.

It is found in the cytoplasm. It participates in lipid metabolism; fatty acid biosynthesis. In terms of biological role, carrier of the growing fatty acid chain in fatty acid biosynthesis. This is Acyl carrier protein from Amoebophilus asiaticus (strain 5a2).